A 270-amino-acid polypeptide reads, in one-letter code: tRNA pseudouridine synthase A (270 aa).

D60 serves as the catalytic Nucleophile. The RNA binding stretch occupies residues 107 to 111 (FHARF). Residue Y118 participates in substrate binding. Residues 168-172 (QCQSR) form an interaction with tRNA region.

This sequence belongs to the tRNA pseudouridine synthase TruA family. Homodimer.

The catalysed reaction is uridine(38/39/40) in tRNA = pseudouridine(38/39/40) in tRNA. In terms of biological role, formation of pseudouridine at positions 38, 39 and 40 in the anticodon stem and loop of transfer RNAs. This is tRNA pseudouridine synthase A from Klebsiella pneumoniae subsp. pneumoniae (strain ATCC 700721 / MGH 78578).